The following is an 876-amino-acid chain: Alanine--tRNA ligase (876 aa).

Lys74 is modified (N6-acetyllysine). Residues His564, His568, Cys666, and His670 each coordinate Zn(2+).

Belongs to the class-II aminoacyl-tRNA synthetase family. Homotetramer. Requires Zn(2+) as cofactor.

It localises to the cytoplasm. It catalyses the reaction tRNA(Ala) + L-alanine + ATP = L-alanyl-tRNA(Ala) + AMP + diphosphate. Functionally, catalyzes the attachment of alanine to tRNA(Ala) in a two-step reaction: alanine is first activated by ATP to form Ala-AMP and then transferred to the acceptor end of tRNA(Ala). Also edits incorrectly charged Ser-tRNA(Ala) and Gly-tRNA(Ala) via its editing domain. The sequence is that of Alanine--tRNA ligase from Shigella flexneri serotype 5b (strain 8401).